Consider the following 257-residue polypeptide: K88 minor fimbrial subunit FaeJ (257 aa).

Residues 1-26 (MLNIIHRLKSGMFPALFFLTSASVLA) form the signal peptide.

It localises to the fimbrium. Its function is as follows. K88 minor fimbrial subunit, plays an essential role in the biogenesis of the K88 fimbriae. Fimbriae (also called pili), are polar filaments radiating from the surface of the bacterium to a length of 0.5-1.5 micrometers and numbering 100-300 per cell. They enable bacteria to colonize the epithelium of specific host organs. The sequence is that of K88 minor fimbrial subunit FaeJ (faeJ) from Escherichia coli.